The chain runs to 368 residues: (3S,6E)-nerolidol synthase (368 aa).

Positions 91, 228, and 232 each coordinate Mg(2+). A DDXXE motif motif is present at residues 91–95 (DDLLE).

Belongs to the terpene synthase family. Mg(2+) is required as a cofactor. The cofactor is Mn(2+).

It carries out the reaction (2E,6E)-farnesyl diphosphate + H2O = (3S,6E)-nerolidol + diphosphate. The catalysed reaction is (2E)-geranyl diphosphate + H2O = (S)-linalool + diphosphate. It functions in the pathway secondary metabolite biosynthesis; terpenoid biosynthesis. In terms of biological role, sesquiterpene synthase converting farnesyl diphosphate to nerolidol. Also has a monoterpene synthase activity, converting geranyl diphosphate into linalool as the major product. Has no diterpene synthase activity. This chain is (3S,6E)-nerolidol synthase, found in Selaginella moellendorffii (Spikemoss).